We begin with the raw amino-acid sequence, 229 residues long: Potassium/proton antiporter CemA (229 aa).

2 consecutive transmembrane segments (helical) span residues 7–27 (FTPL…SFSV) and 107–127 (ILHF…SILG).

This sequence belongs to the CemA family.

It is found in the plastid. It localises to the chloroplast inner membrane. The enzyme catalyses K(+)(in) + H(+)(out) = K(+)(out) + H(+)(in). Contributes to K(+)/H(+) antiport activity by supporting proton efflux to control proton extrusion and homeostasis in chloroplasts in a light-dependent manner to modulate photosynthesis. Prevents excessive induction of non-photochemical quenching (NPQ) under continuous-light conditions. Indirectly promotes efficient inorganic carbon uptake into chloroplasts. This chain is Potassium/proton antiporter CemA, found in Solanum tuberosum (Potato).